Here is a 522-residue protein sequence, read N- to C-terminus: Lysine--tRNA ligase (522 aa).

A 'HIGH' region motif is present at residues 44-52 (PSGLPHIGT). The short motif at 290–294 (KISKS) is the 'KMSKS' region element. K293 is a binding site for ATP.

Belongs to the class-I aminoacyl-tRNA synthetase family.

It localises to the cytoplasm. It carries out the reaction tRNA(Lys) + L-lysine + ATP = L-lysyl-tRNA(Lys) + AMP + diphosphate. In Rickettsia bellii (strain RML369-C), this protein is Lysine--tRNA ligase.